An 87-amino-acid chain; its full sequence is Putative RNase MJ1548 (87 aa).

Residues arginine 65 and histidine 70 contribute to the active site. The short motif at arginine 65–tyrosine 72 is the RX(4)HXY motif element. An O-di-AMP-tyrosine modification is found at tyrosine 72.

The protein belongs to the HepT RNase toxin family. As to quaternary structure, homodimer, probably forms a complex with cognate antitoxin MJ1547. Modified by cognate antitoxin MJ1547; probably at least 2 successive AMPylation events occur on Tyr-72.

Probable toxic component of a putative type VII toxin-antitoxin (TA) system, probably an RNase. Probably neutralized by cognate antitoxin MJ1547. Neutralization may be due to AMPylation by antitoxin MJ1547. The sequence is that of Putative RNase MJ1548 from Methanocaldococcus jannaschii (strain ATCC 43067 / DSM 2661 / JAL-1 / JCM 10045 / NBRC 100440) (Methanococcus jannaschii).